Here is a 707-residue protein sequence, read N- to C-terminus: Lipase maturation factor 2 (707 aa).

Transmembrane regions (helical) follow at residues Ala10–Ile30, Met78–Leu98, Leu102–Leu122, Trp126–Met146, Gly158–Val178, Phe220–Phe240, Ile256–Cys276, Leu309–Phe329, Ile358–Met378, and Leu395–Tyr415. The N-linked (GlcNAc...) asparagine glycan is linked to Asn483. The chain crosses the membrane as a helical span at residues Leu634–Gly654. The interval Val661–Ser707 is disordered. The span at Ser680–Gly694 shows a compositional bias: low complexity. The span at Asp696 to Ser707 shows a compositional bias: basic and acidic residues.

The protein belongs to the lipase maturation factor family.

The protein resides in the endoplasmic reticulum membrane. Involved in the maturation of specific proteins in the endoplasmic reticulum. This is Lipase maturation factor 2 (lmf2) from Xenopus laevis (African clawed frog).